A 372-amino-acid chain; its full sequence is DNA primase small subunit PriS (372 aa).

Residues aspartate 95, aspartate 97, and aspartate 280 contribute to the active site.

Belongs to the eukaryotic-type primase small subunit family. Heterodimer of a small subunit (PriS) and a large subunit (PriL). The cofactor is Mg(2+). Mn(2+) is required as a cofactor.

In terms of biological role, catalytic subunit of DNA primase, an RNA polymerase that catalyzes the synthesis of short RNA molecules used as primers for DNA polymerase during DNA replication. The small subunit contains the primase catalytic core and has DNA synthesis activity on its own. Binding to the large subunit stabilizes and modulates the activity, increasing the rate of DNA synthesis while decreasing the length of the DNA fragments, and conferring RNA synthesis capability. The DNA polymerase activity may enable DNA primase to also catalyze primer extension after primer synthesis. May also play a role in DNA repair. The polypeptide is DNA primase small subunit PriS (Cenarchaeum symbiosum (strain A)).